A 234-amino-acid chain; its full sequence is Sugar fermentation stimulation protein A (234 aa).

Residues Leu201–Ser220 constitute a DNA-binding region (H-T-H motif).

This sequence belongs to the SfsA family.

Binds to DNA non-specifically. Could be a regulatory factor involved in maltose metabolism. This is Sugar fermentation stimulation protein A from Escherichia coli (strain 55989 / EAEC).